Consider the following 213-residue polypeptide: Pyrrolidone-carboxylate peptidase (213 aa).

Active-site residues include Glu-78, Cys-141, and His-165.

It belongs to the peptidase C15 family. Homotetramer.

Its subcellular location is the cytoplasm. The catalysed reaction is Release of an N-terminal pyroglutamyl group from a polypeptide, the second amino acid generally not being Pro.. Functionally, removes 5-oxoproline from various penultimate amino acid residues except L-proline. This Clostridium perfringens (strain 13 / Type A) protein is Pyrrolidone-carboxylate peptidase.